The chain runs to 53 residues: ATP synthase protein 8 (53 aa).

Residues 6–26 (PIGWLSLFIIFSLTFILFSMM) traverse the membrane as a helical segment.

It belongs to the ATPase protein 8 family. In terms of assembly, F-type ATPases have 2 components, CF(1) - the catalytic core - and CF(0) - the membrane proton channel.

Its subcellular location is the mitochondrion membrane. Functionally, mitochondrial membrane ATP synthase (F(1)F(0) ATP synthase or Complex V) produces ATP from ADP in the presence of a proton gradient across the membrane which is generated by electron transport complexes of the respiratory chain. F-type ATPases consist of two structural domains, F(1) - containing the extramembraneous catalytic core and F(0) - containing the membrane proton channel, linked together by a central stalk and a peripheral stalk. During catalysis, ATP synthesis in the catalytic domain of F(1) is coupled via a rotary mechanism of the central stalk subunits to proton translocation. Part of the complex F(0) domain. Minor subunit located with subunit a in the membrane. This Ceratitis capitata (Mediterranean fruit fly) protein is ATP synthase protein 8 (mt:ATPase8).